A 228-amino-acid chain; its full sequence is DNA repair protein RecO (228 aa).

This sequence belongs to the RecO family.

Involved in DNA repair and RecF pathway recombination. The chain is DNA repair protein RecO from Mannheimia succiniciproducens (strain KCTC 0769BP / MBEL55E).